The following is a 274-amino-acid chain: Bis(5'-nucleosyl)-tetraphosphatase, symmetrical (274 aa).

It belongs to the Ap4A hydrolase family.

It catalyses the reaction P(1),P(4)-bis(5'-adenosyl) tetraphosphate + H2O = 2 ADP + 2 H(+). In terms of biological role, hydrolyzes diadenosine 5',5'''-P1,P4-tetraphosphate to yield ADP. This is Bis(5'-nucleosyl)-tetraphosphatase, symmetrical from Shewanella oneidensis (strain ATCC 700550 / JCM 31522 / CIP 106686 / LMG 19005 / NCIMB 14063 / MR-1).